The sequence spans 507 residues: Carnosic acid synthase (507 aa).

The helical transmembrane segment at 6-23 (VFSLAFLAAWFIVVFPRW) threads the bilayer. Residue Cys450 coordinates heme.

Belongs to the cytochrome P450 family. Requires heme as cofactor. In terms of tissue distribution, expressed in glandular trichomes of young leaves.

The protein resides in the membrane. It carries out the reaction 11-hydroxyferruginol + 3 reduced [NADPH--hemoprotein reductase] + 3 O2 = carnosate + 3 oxidized [NADPH--hemoprotein reductase] + 4 H2O + 4 H(+). The catalysed reaction is miltiradiene + 2 reduced [NADPH--hemoprotein reductase] + 2 O2 = miltiradien-20-al + 2 oxidized [NADPH--hemoprotein reductase] + 3 H2O + 2 H(+). It catalyses the reaction ferruginol + 3 reduced [NADPH--hemoprotein reductase] + 3 O2 = pisiferate + 3 oxidized [NADPH--hemoprotein reductase] + 4 H2O + 4 H(+). It participates in secondary metabolite biosynthesis; terpenoid biosynthesis. Functionally, monooxygenase involved in the biosynthesis of carnosate, a potent antioxidant labdane-related diterpene natural product. Catalyzes the oxidation of 11-hydroxyferruginol to produce carnosate. Mediates the conversion of miltiradien into miltiradien-20-al. Also involved in the production of pisiferic acid and derivative products from ferruginol. The protein is Carnosic acid synthase of Rosmarinus officinalis (Rosemary).